A 578-amino-acid polypeptide reads, in one-letter code: Vacuolar protein 8 (578 aa).

ARM repeat units follow at residues 58-95 (NRAE…FAEI), 96-135 (TERD…NLAV), 137-176 (ADNK…NLAT), 178-217 (EDNK…NMTH), 219-258 (DDNR…NIAV), 262-301 (NRKR…NLAS), 303-342 (EKYQ…NISI), 344-384 (PLNE…NLAA), and 428-467 (DELK…NLSS).

Belongs to the beta-catenin family.

Its subcellular location is the vacuole membrane. Functionally, functions in both vacuole inheritance and protein targeting from the cytoplasm to vacuole. This chain is Vacuolar protein 8 (vac8), found in Aspergillus oryzae (strain ATCC 42149 / RIB 40) (Yellow koji mold).